Reading from the N-terminus, the 378-residue chain is 1-acyl-sn-glycerol-3-phosphate acyltransferase delta (378 aa).

A helical membrane pass occupies residues 11 to 31; that stretch reads FLCHLIFCYVFIVSGLIINTI. Positions 96–101 match the HXXXXD motif motif; that stretch reads HKFEID. The next 3 membrane-spanning stretches (helical) occupy residues 125-145, 307-327, and 338-358; these read ELAY…VFCT, TLVN…RFVI, and LASF…MIGV.

This sequence belongs to the 1-acyl-sn-glycerol-3-phosphate acyltransferase family.

Its subcellular location is the endoplasmic reticulum membrane. The enzyme catalyses a 1-acyl-sn-glycero-3-phosphate + an acyl-CoA = a 1,2-diacyl-sn-glycero-3-phosphate + CoA. It catalyses the reaction (4Z,7Z,10Z,13Z,16Z,19Z)-docosahexaenoyl-CoA + 1-hexadecanoyl-sn-glycero-3-phosphate = 1-hexadecanoyl-2-(4Z,7Z,10Z,13Z,16Z,19Z-docosahexaenoyl)-sn-glycero-3-phosphate + CoA. It carries out the reaction 1-octadecanoyl-sn-glycero-3-phosphate + (9Z,12Z)-octadecadienoyl-CoA = 1-octadecanoyl-2-(9Z,12Z-octadecadienoyl)-sn-glycero-3-phosphate + CoA. The catalysed reaction is 1-octadecanoyl-sn-glycero-3-phosphate + (4Z,7Z,10Z,13Z,16Z,19Z)-docosahexaenoyl-CoA = 1-octadecanoyl-2-(4Z,7Z,10Z,13Z,16Z,19Z-docosahexaenoyl)-sn-glycero-3-phosphate + CoA. The enzyme catalyses (4Z,7Z,10Z,13Z,16Z,19Z)-docosahexaenoyl-CoA + 1-(9Z-octadecenoyl)-sn-glycero-3-phosphate = 1-(9Z-octadecenoyl)-2-(4Z,7Z,10Z,13Z,16Z,19Z-docosahexaenoyl)-sn-glycero-3-phosphate + CoA. The protein operates within phospholipid metabolism; CDP-diacylglycerol biosynthesis; CDP-diacylglycerol from sn-glycerol 3-phosphate: step 2/3. Converts 1-acyl-sn-glycerol-3-phosphate (lysophosphatidic acid or LPA) into 1,2-diacyl-sn-glycerol-3-phosphate (phosphatidic acid or PA) by incorporating an acyl moiety at the sn-2 position of the glycerol backbone. Exhibits high acyl-CoA specificity for polyunsaturated fatty acyl-CoA, especially docosahexaenoyl-CoA (22:6-CoA, DHA-CoA). The protein is 1-acyl-sn-glycerol-3-phosphate acyltransferase delta (AGPAT4) of Bos taurus (Bovine).